A 558-amino-acid polypeptide reads, in one-letter code: Serine palmitoyltransferase 2 (558 aa).

Residues 33 to 42 (HDDDEEEEEV) show a composition bias toward acidic residues. The disordered stretch occupies residues 33–57 (HDDDEEEEEVKVDQGSEETTSSHDI). Position 384 is an N6-(pyridoxal phosphate)lysine (lysine 384).

Belongs to the class-II pyridoxal-phosphate-dependent aminotransferase family. In terms of assembly, heterodimer of sptl-1/sptl-2. Requires pyridoxal 5'-phosphate as cofactor.

It catalyses the reaction L-serine + hexadecanoyl-CoA + H(+) = 3-oxosphinganine + CO2 + CoA. Its pathway is lipid metabolism; sphingolipid metabolism. Functionally, component of the serine palmitoyltransferase (SPT) that catalyzes the first committed step in sphingolipid biosynthesis, which is the condensation of an acyl-CoA species and L-serine. The catalytic core is composed of a heterodimer of sptl-1 and sptl-2 or sptl-1 and sptl-3. Required for the specification of abicobasal polarity and development of the gut lumen. This chain is Serine palmitoyltransferase 2 (sptl-2), found in Caenorhabditis elegans.